The sequence spans 90 residues: UPF0223 protein lwe1035 (90 aa).

It belongs to the UPF0223 family.

This Listeria welshimeri serovar 6b (strain ATCC 35897 / DSM 20650 / CCUG 15529 / CIP 8149 / NCTC 11857 / SLCC 5334 / V8) protein is UPF0223 protein lwe1035.